The primary structure comprises 113 residues: Hydrogenase maturation factor HypA (113 aa).

His2 contributes to the Ni(2+) binding site. Cys70, Cys73, Cys86, and Cys88 together coordinate Zn(2+).

This sequence belongs to the HypA/HybF family.

In terms of biological role, involved in the maturation of [NiFe] hydrogenases. Required for nickel insertion into the metal center of the hydrogenase. The chain is Hydrogenase maturation factor HypA from Nostoc sp. (strain PCC 7120 / SAG 25.82 / UTEX 2576).